A 191-amino-acid chain; its full sequence is Molybdenum cofactor guanylyltransferase (191 aa).

GTP contacts are provided by residues 13-15 (LAG), Lys-26, Asp-72, and Asp-102. Position 102 (Asp-102) interacts with Mg(2+).

Belongs to the MobA family. As to quaternary structure, monomer. It depends on Mg(2+) as a cofactor.

It localises to the cytoplasm. It carries out the reaction Mo-molybdopterin + GTP + H(+) = Mo-molybdopterin guanine dinucleotide + diphosphate. Its function is as follows. Transfers a GMP moiety from GTP to Mo-molybdopterin (Mo-MPT) cofactor (Moco or molybdenum cofactor) to form Mo-molybdopterin guanine dinucleotide (Mo-MGD) cofactor. This Pseudomonas putida (strain ATCC 47054 / DSM 6125 / CFBP 8728 / NCIMB 11950 / KT2440) protein is Molybdenum cofactor guanylyltransferase.